A 101-amino-acid polypeptide reads, in one-letter code: Small ribosomal subunit protein uS14 (101 aa).

Belongs to the universal ribosomal protein uS14 family. Part of the 30S ribosomal subunit. Contacts proteins S3 and S10.

Binds 16S rRNA, required for the assembly of 30S particles and may also be responsible for determining the conformation of the 16S rRNA at the A site. The polypeptide is Small ribosomal subunit protein uS14 (Vibrio campbellii (strain ATCC BAA-1116)).